Here is a 318-residue protein sequence, read N- to C-terminus: Methionyl-tRNA formyltransferase (318 aa).

(6S)-5,6,7,8-tetrahydrofolate is bound at residue 120-123 (SLLP).

The protein belongs to the Fmt family.

The enzyme catalyses L-methionyl-tRNA(fMet) + (6R)-10-formyltetrahydrofolate = N-formyl-L-methionyl-tRNA(fMet) + (6S)-5,6,7,8-tetrahydrofolate + H(+). Functionally, attaches a formyl group to the free amino group of methionyl-tRNA(fMet). The formyl group appears to play a dual role in the initiator identity of N-formylmethionyl-tRNA by promoting its recognition by IF2 and preventing the misappropriation of this tRNA by the elongation apparatus. The sequence is that of Methionyl-tRNA formyltransferase from Variovorax paradoxus (strain S110).